The following is a 171-amino-acid chain: MDPNMQNMMSSYLKIKKLVGDEGSDFEEEEEGEDEEEEEQERVVKVNFAESQLKKKKLNLGEGSGGKSGEKHTASGGGVVAQPCCLVENCGADLRNCKKYYQRHRVCEVHAKAPVVSVEGLMQRFCQQCSRFHDLSEFDQTKRSCRRRLAGHNERRRKSSLESHKEGRSPR.

Disordered regions lie at residues 20-46 (GDEGSDFEEEEEGEDEEEEEQERVVKV) and 57-76 (KLNLGEGSGGKSGEKHTASG). Acidic residues predominate over residues 22–40 (EGSDFEEEEEGEDEEEEEQ). An SBP-type zinc finger spans residues 82–159 (QPCCLVENCG…AGHNERRRKS (78 aa)). Residues Cys-85, Cys-90, Cys-107, His-110, Cys-126, Cys-129, His-133, and Cys-145 each coordinate Zn(2+). Positions 142 to 158 (KRSCRRRLAGHNERRRK) match the Bipartite nuclear localization signal motif. Basic residues predominate over residues 149-158 (LAGHNERRRK). Residues 149–171 (LAGHNERRRKSSLESHKEGRSPR) are disordered. Residues 159 to 171 (SSLESHKEGRSPR) are compositionally biased toward basic and acidic residues.

It is found in the nucleus. Functionally, probable transcriptional factor. Binds to the promoter of the SQUAMOSA gene. The sequence is that of Squamosa promoter-binding protein 2 (SBP2) from Antirrhinum majus (Garden snapdragon).